The following is a 316-amino-acid chain: Leucine-rich repeat-containing protein 73 (316 aa).

LRR repeat units lie at residues 57-78, 86-106, 114-137, 145-166, 174-187, 202-223, and 231-250; these read SLAQ…KQLA, SIQS…ALLN, ALVA…CGLL, GLKE…SRLA, QVRV…PLGD, TLEV…TLLD, and ALRS…QQQI. The tract at residues 257-296 is disordered; the sequence is GEEEEEVAGGAGDTQEWERGREPAAHQRGSSSWMCPSDPS. Positions 272 to 281 are enriched in basic and acidic residues; sequence EWERGREPAA. Residues 286 to 296 are compositionally biased toward low complexity; sequence SSSWMCPSDPS.

The protein is Leucine-rich repeat-containing protein 73 (LRRC73) of Homo sapiens (Human).